The primary structure comprises 305 residues: GMP synthase [glutamine-hydrolyzing] subunit B (305 aa).

The GMPS ATP-PPase domain occupies 2–184 (VNIEKFIDQA…LGLPAEIQHR (183 aa)). Residue 29-35 (SGGVDSS) participates in ATP binding.

In terms of assembly, heterodimer composed of a glutamine amidotransferase subunit (A) and a GMP-binding subunit (B).

The catalysed reaction is XMP + L-glutamine + ATP + H2O = GMP + L-glutamate + AMP + diphosphate + 2 H(+). Its pathway is purine metabolism; GMP biosynthesis; GMP from XMP (L-Gln route): step 1/1. In terms of biological role, catalyzes the synthesis of GMP from XMP. The sequence is that of GMP synthase [glutamine-hydrolyzing] subunit B from Methanoculleus marisnigri (strain ATCC 35101 / DSM 1498 / JR1).